The primary structure comprises 203 residues: Dephospho-CoA kinase (203 aa).

Positions 3–201 constitute a DPCK domain; that stretch reads SVGLTGGIGS…QRYLECAAAA (199 aa). 11-16 serves as a coordination point for ATP; that stretch reads GSGKTT.

This sequence belongs to the CoaE family.

It localises to the cytoplasm. It carries out the reaction 3'-dephospho-CoA + ATP = ADP + CoA + H(+). The protein operates within cofactor biosynthesis; coenzyme A biosynthesis; CoA from (R)-pantothenate: step 5/5. Catalyzes the phosphorylation of the 3'-hydroxyl group of dephosphocoenzyme A to form coenzyme A. The protein is Dephospho-CoA kinase of Burkholderia pseudomallei (strain 1710b).